We begin with the raw amino-acid sequence, 694 residues long: Elongation factor G (694 aa).

The tr-type G domain occupies 8 to 287; sequence EDYRNFGIMA…AVVEFLPAPT (280 aa). GTP is bound by residues 17 to 24, 86 to 90, and 140 to 143; these read AHIDAGKT, DTPGH, and NKMD.

It belongs to the TRAFAC class translation factor GTPase superfamily. Classic translation factor GTPase family. EF-G/EF-2 subfamily.

Its subcellular location is the cytoplasm. Its function is as follows. Catalyzes the GTP-dependent ribosomal translocation step during translation elongation. During this step, the ribosome changes from the pre-translocational (PRE) to the post-translocational (POST) state as the newly formed A-site-bound peptidyl-tRNA and P-site-bound deacylated tRNA move to the P and E sites, respectively. Catalyzes the coordinated movement of the two tRNA molecules, the mRNA and conformational changes in the ribosome. The protein is Elongation factor G of Brucella melitensis biotype 2 (strain ATCC 23457).